Consider the following 159-residue polypeptide: Trafficking protein particle complex subunit 6A (159 aa).

Ser33 is subject to Phosphoserine.

This sequence belongs to the TRAPP small subunits family. BET3 subfamily. In terms of assembly, part of the multisubunit transport protein particle (TRAPP) complex. Heterodimer with TRAPPC3. The heterodimer TRAPPC3-TRAPPC6A interacts with TRAPPC2L. Interacts with TRAPPC2L.

It is found in the golgi apparatus. The protein resides in the cis-Golgi network. Its subcellular location is the endoplasmic reticulum. Functionally, may play a role in vesicular transport during the biogenesis of melanosomes. The polypeptide is Trafficking protein particle complex subunit 6A (Bos taurus (Bovine)).